The sequence spans 27 residues: Histone H1.3, embryonic (27 aa).

Residues 1-27 (HVVAAITALKERGGSSHQALKKYKAAN) enclose the H15 domain.

The protein belongs to the histone H1/H5 family.

Its subcellular location is the nucleus. The protein resides in the chromosome. Histones H1 are necessary for the condensation of nucleosome chains into higher-order structures. This chain is Histone H1.3, embryonic, found in Parechinus angulosus (Angulate sea urchin).